We begin with the raw amino-acid sequence, 574 residues long: Choline transporter-like protein ctl1 (574 aa).

N-linked (GlcNAc...) asparagine glycosylation is found at asparagine 40 and asparagine 101. 8 helical membrane-spanning segments follow: residues 144-164 (WGLT…LMVW), 189-209 (KDAI…VAIP), 211-231 (FLYF…VYLL), 246-266 (LMLL…YYVW), 291-311 (QITL…FIWV), 336-356 (WVLA…FHAL), 396-416 (YGLC…LHFL), and 434-456 (TSAS…VPYM). A glycan (N-linked (GlcNAc...) asparagine) is linked at asparagine 457. Helical transmembrane passes span 485-505 (LLAA…NYSI) and 511-531 (FYGY…IGAI). An N-linked (GlcNAc...) asparagine glycan is attached at asparagine 558.

This sequence belongs to the CTL (choline transporter-like) family. In terms of assembly, interacts with atg9.

The protein resides in the endoplasmic reticulum membrane. It localises to the preautophagosomal structure membrane. Its function is as follows. Required for the normal organization of the preautophagosomal structure (PAS) and for the correct subcellular location of atg9. The protein is Choline transporter-like protein ctl1 (ctl1) of Schizosaccharomyces pombe (strain 972 / ATCC 24843) (Fission yeast).